Here is a 138-residue protein sequence, read N- to C-terminus: MTTHNRPARVAEEFRHELSAILARGLKDPRITGFVTVTGSKMSPDLKEATVYVSIHGDERVRKDTFAGLQAAAGFLQREVSRALRLRNTPHLRFVYDESVARGDRIERLLREARTQGQAPAADVEPAPGAAPDDEAEE.

Residues 112–138 (EARTQGQAPAADVEPAPGAAPDDEAEE) are disordered. Residues 119–131 (APAADVEPAPGAA) show a composition bias toward low complexity.

It belongs to the RbfA family. As to quaternary structure, monomer. Binds 30S ribosomal subunits, but not 50S ribosomal subunits or 70S ribosomes.

It is found in the cytoplasm. One of several proteins that assist in the late maturation steps of the functional core of the 30S ribosomal subunit. Associates with free 30S ribosomal subunits (but not with 30S subunits that are part of 70S ribosomes or polysomes). Required for efficient processing of 16S rRNA. May interact with the 5'-terminal helix region of 16S rRNA. The polypeptide is Ribosome-binding factor A (Anaeromyxobacter sp. (strain K)).